A 214-amino-acid chain; its full sequence is Adenylate kinase (214 aa).

Residue Gly10–Thr15 coordinates ATP. Residues Ser30 to Val59 form an NMP region. Residues Thr31, Arg36, Gln57–Val59, Gly85–Arg88, and Gln92 contribute to the AMP site. Positions Gly122 to Asp159 are LID. Residues Arg123 and Val132–Tyr133 contribute to the ATP site. AMP contacts are provided by Arg156 and Arg167. An ATP-binding site is contributed by Gln200.

Belongs to the adenylate kinase family. As to quaternary structure, monomer.

The protein localises to the cytoplasm. It carries out the reaction AMP + ATP = 2 ADP. Its pathway is purine metabolism; AMP biosynthesis via salvage pathway; AMP from ADP: step 1/1. Functionally, catalyzes the reversible transfer of the terminal phosphate group between ATP and AMP. Plays an important role in cellular energy homeostasis and in adenine nucleotide metabolism. This Shewanella baltica (strain OS155 / ATCC BAA-1091) protein is Adenylate kinase.